The following is a 173-amino-acid chain: Plasmolipin (173 aa).

Residues 1–34 (MADFPGKVSTQTSSQEPQRSFAISSSVDMGFIKS) lie on the Cytoplasmic side of the membrane. Residues 31-160 (FIKSIPGILL…SSYFAYLGWR (130 aa)) form the MARVEL domain. A helical transmembrane segment spans residues 35–55 (IPGILLIAEIVVGLLVWTLIA). Topologically, residues 56–67 (STPHYLIPALGW) are extracellular. A helical membrane pass occupies residues 68–88 (VLFVSITLWLLSIALLVILLL). Residues 89 to 98 (SLHQRLPSVP) are Cytoplasmic-facing. The chain crosses the membrane as a helical span at residues 99-119 (WPLVLLVFYSVAALLYLTAFL). At 120–138 (ANAATVPGGYYQGHLGASA) the chain is on the extracellular side. Residues 139-159 (FFGIVETLLYTASSYFAYLGW) traverse the membrane as a helical segment. Residues 160–173 (RGEGQNAAGSTVPV) lie on the Cytoplasmic side of the membrane.

This sequence belongs to the MAL family. Forms oligomers. Expressed in the posterior midgut.

It is found in the cell membrane. The protein resides in the myelin membrane. The protein localises to the apical cell membrane. Its subcellular location is the recycling endosome membrane. It localises to the vesicle. Main component of the myelin sheath that plays an important role in myelin membrane biogenesis and myelination. Plays an essential function in apical endocytosis. Plays an important role by activating the Notch signaling pathway, which is essential for cell differentiation and results in correct patterning of the intestinal epithelium, particularly of the posterior gut absorptive cells. The sequence is that of Plasmolipin (pllp) from Danio rerio (Zebrafish).